Here is a 258-residue protein sequence, read N- to C-terminus: Undecaprenyl-diphosphatase (258 aa).

The next 8 helical transmembrane spans lie at 1 to 21 (MSII…FLPV), 42 to 62 (LKCF…FTFF), 71 to 91 (LWIK…LLYS), 96 to 116 (LFSQ…FIVV), 134 to 154 (GISY…MVPG), 173 to 193 (QTAA…ATFY), 211 to 231 (LFLL…KMFL), and 237 to 257 (FDYI…MFFV).

The protein belongs to the UppP family.

The protein localises to the cell inner membrane. The catalysed reaction is di-trans,octa-cis-undecaprenyl diphosphate + H2O = di-trans,octa-cis-undecaprenyl phosphate + phosphate + H(+). Its function is as follows. Catalyzes the dephosphorylation of undecaprenyl diphosphate (UPP). Confers resistance to bacitracin. This is Undecaprenyl-diphosphatase from Campylobacter hominis (strain ATCC BAA-381 / DSM 21671 / CCUG 45161 / LMG 19568 / NCTC 13146 / CH001A).